The primary structure comprises 1526 residues: Probable autotransporter YpjA (1526 aa).

Positions 1–29 (MNRTSPYYCRRSVLSLLISALIYAPPGMA) are cleaved as a signal peptide. Residues 1173 to 1223 (NSNWNLTNDVKPNPDPIPNPKPDPKPDPKPDPNPKPDPTPDPTPTPVPEKR) form a disordered region. Over residues 1194 to 1206 (PDPKPDPKPDPNP) the composition is skewed to basic and acidic residues. Residues 1207-1219 (KPDPTPDPTPTPV) show a composition bias toward pro residues. The Autotransporter domain maps to 1258–1526 (ASPHNNNVWG…NAVAGVNWSF (269 aa)).

Its subcellular location is the cell outer membrane. Upon overexpression shows increased adherence to polyvinyl chloride (PVC) plates, increased mature biofilm formation. The sequence is that of Probable autotransporter YpjA (ypjA) from Escherichia coli (strain K12).